The sequence spans 177 residues: Arginine metabolism regulation protein I (177 aa).

A compositionally biased stretch (polar residues) spans 1 to 12 (MTSNSDGSSTSP). Disordered stretches follow at residues 1–82 (MTSN…TRRK) and 157–177 (NASDTPDATDTSPAQEQSPAN). Residues 40–53 (QDQEGDFDEEDDDD) show a composition bias toward acidic residues. The span at 56 to 67 (SVSTSTPTPTIT) shows a compositional bias: low complexity. Residues 80 to 134 (RRKQPIRYIENKTRRHVTFSKRRHGIMKKAYELSVLTGANILLLILANSGLVYTF) enclose the MADS-box domain. Residues 158 to 177 (ASDTPDATDTSPAQEQSPAN) are compositionally biased toward polar residues.

In terms of assembly, interacts with ARG81 and ARG82.

The protein localises to the nucleus. Functionally, with ARG81, ARG82 and MCM1, coordinates the expression of arginine anabolic and catabolic genes in response to arginine. In Saccharomyces cerevisiae (strain ATCC 204508 / S288c) (Baker's yeast), this protein is Arginine metabolism regulation protein I (ARG80).